Consider the following 95-residue polypeptide: Mitochondrial import inner membrane translocase subunit Tim13 (95 aa).

Position 1 is an N-acetylmethionine (Met1). Residue Ser7 is modified to Phosphoserine. The Twin CX3C motif motif lies at 46–69; sequence CFRKCIGKPGGSLDNSEQKCIAMC. Intrachain disulfides connect Cys46–Cys69 and Cys50–Cys65. The residue at position 53 (Lys53) is an N6-succinyllysine.

Belongs to the small Tim family. Heterohexamer; composed of 3 copies of TIMM8 (TIMM8A or TIMM8B) and 3 copies of TIMM13, named soluble 70 kDa complex. Associates with the TIM22 complex, whose core is composed of TIMM22. In terms of tissue distribution, present at high level in liver and brain, and at lower level in muscle and heart. In CNS sections, it is predominantly present in the soma and the dendritic portion of the Purkinje cells of the cerebellum, but not in the glial cells. Scattered expression also is also detected in the brain stem, olfactory bulb, substantia nigra, hippocampus and striatum (at protein level).

It is found in the mitochondrion inner membrane. Functionally, mitochondrial intermembrane chaperone that participates in the import and insertion of some multi-pass transmembrane proteins into the mitochondrial inner membrane. Also required for the transfer of beta-barrel precursors from the TOM complex to the sorting and assembly machinery (SAM complex) of the outer membrane. Acts as a chaperone-like protein that protects the hydrophobic precursors from aggregation and guide them through the mitochondrial intermembrane space. The TIMM8-TIMM13 complex mediates the import of proteins such as TIMM23, SLC25A12/ARALAR1 and SLC25A13/ARALAR2, while the predominant TIMM9-TIMM10 70 kDa complex mediates the import of much more proteins. The polypeptide is Mitochondrial import inner membrane translocase subunit Tim13 (Timm13) (Mus musculus (Mouse)).